Consider the following 127-residue polypeptide: Turripeptide OL172 (127 aa).

Residues 1–20 form the signal peptide; the sequence is MFSTLIFLTAVTLLMMPSQT. The propeptide occupies 42–43; that stretch reads QR. The residue at position 44 (glutamine 44) is a Pyrrolidone carboxylic acid. Positions 73–75 are excised as a propeptide; that stretch reads QRK. Glutamine 76 is modified (pyrrolidone carboxylic acid). A propeptide spanning residues 104 to 106 is cleaved from the precursor; it reads QRK. Glutamine 107 carries the pyrrolidone carboxylic acid modification.

Post-translationally, the turripeptide OL172 conotoxin-like contains 2 disulfide bonds. In terms of tissue distribution, expressed by the venom duct.

It localises to the secreted. Functionally, acts as a neurotoxin by inhibiting an ion channel. This is Turripeptide OL172 from Iotyrris olangoensis (Sea snail).